The chain runs to 160 residues: Transcription elongation factor GreA (160 aa).

Residues 1–71 (MAEKTYPMTK…GQISTLETQI (71 aa)) are a coiled coil.

It belongs to the GreA/GreB family.

Functionally, necessary for efficient RNA polymerase transcription elongation past template-encoded arresting sites. The arresting sites in DNA have the property of trapping a certain fraction of elongating RNA polymerases that pass through, resulting in locked ternary complexes. Cleavage of the nascent transcript by cleavage factors such as GreA or GreB allows the resumption of elongation from the new 3'terminus. GreA releases sequences of 2 to 3 nucleotides. The polypeptide is Transcription elongation factor GreA (Streptococcus uberis (strain ATCC BAA-854 / 0140J)).